A 350-amino-acid polypeptide reads, in one-letter code: MAISPRDEQNRSVDLWFAYKVPKLTKDADSDSASGYEYVYYDRQVGAVQKSPNLMNDPKGALFYTLDSVFGDPGDTTGWILYNDEMPADANRSNNATLGHTKGVIAFDIASSSALWLLHSWPKYASPSVPGVPTPLYGQTFLCLSLDLATAGKLAAQMALHQQPQVYLPRTGGLDHTSPLYALTQPLNASAPGDSDSLDFKTRGGVPFKVIAKNRKWGKDFWNDLVGPTLKADMYVETWIRGKIPPVLDSDGVHKTYDIKFIDLRKLGAPWAWPETQDHAKWGITTTDNWVCVGDINRMVTQEKRGGGTIAFQDPKLWKALCETDLIIPPPGKTDAQARAMIRKTHEPAE.

This sequence belongs to the DNase II family.

This chain is Putative deoxyribonuclease-2, found in Burkholderia thailandensis (strain ATCC 700388 / DSM 13276 / CCUG 48851 / CIP 106301 / E264).